We begin with the raw amino-acid sequence, 344 residues long: Heat-inducible transcription repressor HrcA (344 aa).

This sequence belongs to the HrcA family.

Negative regulator of class I heat shock genes (grpE-dnaK-dnaJ and groELS operons). Prevents heat-shock induction of these operons. This Aster yellows witches'-broom phytoplasma (strain AYWB) protein is Heat-inducible transcription repressor HrcA.